The primary structure comprises 129 residues: Mitochondrial pyruvate carrier 2 (129 aa).

The Mitochondrial matrix segment spans residues 2 to 22 (STSSVRFAFRRFWQSETGPKT). A helical membrane pass occupies residues 23-39 (VHFWAPTLKWGLVFAGF). Residues 40–54 (SDMKRPVEKISGAQN) lie on the Mitochondrial intermembrane side of the membrane. A helical transmembrane segment spans residues 55 to 71 (LSLLSTALIWTRWSFVI). The Mitochondrial matrix segment spans residues 72–74 (KPR). The helical transmembrane segment at 75-91 (NILLASVNSFLCLTAGY) threads the bilayer. Residues 92–129 (QLGRIANYRIRNGDSISQLCSYILSGADESKKEITTGR) are Mitochondrial intermembrane-facing.

Belongs to the mitochondrial pyruvate carrier (MPC) (TC 2.A.105) family. In terms of assembly, the functional 150 kDa pyruvate import complex is a heteromer of MPC1 and either MPC2 or MPC3.

The protein resides in the mitochondrion. It localises to the mitochondrion inner membrane. The enzyme catalyses pyruvate(out) + H(+)(out) = pyruvate(in) + H(+)(in). In terms of biological role, mediates the uptake of pyruvate into mitochondria. The sequence is that of Mitochondrial pyruvate carrier 2 from Saccharomyces cerevisiae (strain ATCC 204508 / S288c) (Baker's yeast).